Reading from the N-terminus, the 302-residue chain is Deoxyhypusine hydroxylase (302 aa).

HEAT-like PBS-type repeat units follow at residues 23-49 (ERFR…AFDD), 54-80 (LKHE…VLKD), 87-113 (VRHE…YKKD), 175-201 (DRYR…GLKD), 206-232 (FRHE…NLED), and 239-265 (VRHE…YADD). 4 residues coordinate Fe cation: His-56, Glu-57, His-89, and Glu-90. Residues His-208, Glu-209, His-241, and Glu-242 each contribute to the Fe cation site.

Belongs to the deoxyhypusine hydroxylase family. Fe(2+) is required as a cofactor.

It localises to the endoplasmic reticulum membrane. It catalyses the reaction [eIF5A protein]-deoxyhypusine + AH2 + O2 = [eIF5A protein]-hypusine + A + H2O. The protein operates within protein modification; eIF5A hypusination. Its function is as follows. Catalyzes the hydroxylation of the N(6)-(4-aminobutyl)-L-lysine intermediate to form hypusine, an essential post-translational modification only found in mature eIF-5A factor. Essential for organismal viability and plays a role in a wide number of important processes such as cell growth and proliferation, and regulates induction of autophagy and protein synthesis. Has a role in eIF-5A-mediated translational control. This chain is Deoxyhypusine hydroxylase, found in Drosophila pseudoobscura pseudoobscura (Fruit fly).